The sequence spans 358 residues: Alternative oxidase, mitochondrial (358 aa).

A helical transmembrane segment spans residues 152-172 (LIRYVFLESVAGVPGMVAGML). Positions 159, 198, and 201 each coordinate Fe cation. The helical transmembrane segment at 218-238 (MILGAQGVFFNSFFLCYLFSP) threads the bilayer. Fe cation-binding residues include Glu-249, Glu-306, and His-309.

The protein belongs to the alternative oxidase family. Requires Fe cation as cofactor.

The protein resides in the mitochondrion inner membrane. Catalyzes cyanide-resistant oxygen consumption. May increase respiration when the cytochrome respiratory pathway is restricted, or in response to low temperatures. This is Alternative oxidase, mitochondrial (AOX1) from Monilinia fructicola (Brown rot fungus).